A 252-amino-acid chain; its full sequence is dITP/XTP pyrophosphatase (252 aa).

Substrate is bound at residue 7–12 (THNEGK). The active-site Proton acceptor is D74. Position 74 (D74) interacts with Mg(2+). Substrate is bound by residues S75 and 193–196 (FGYD). The interval 202-229 (DDQPAGRVSTEPDHEGEPLTSAEMTPAE) is disordered. Residues K230 and 235–236 (HR) each bind substrate.

Belongs to the HAM1 NTPase family. As to quaternary structure, homodimer. Mg(2+) is required as a cofactor.

The enzyme catalyses XTP + H2O = XMP + diphosphate + H(+). The catalysed reaction is dITP + H2O = dIMP + diphosphate + H(+). It carries out the reaction ITP + H2O = IMP + diphosphate + H(+). In terms of biological role, pyrophosphatase that catalyzes the hydrolysis of nucleoside triphosphates to their monophosphate derivatives, with a high preference for the non-canonical purine nucleotides XTP (xanthosine triphosphate), dITP (deoxyinosine triphosphate) and ITP. Seems to function as a house-cleaning enzyme that removes non-canonical purine nucleotides from the nucleotide pool, thus preventing their incorporation into DNA/RNA and avoiding chromosomal lesions. This Bifidobacterium longum (strain DJO10A) protein is dITP/XTP pyrophosphatase.